The sequence spans 65 residues: Large ribosomal subunit protein bL35 (65 aa).

The disordered stretch occupies residues 1–25 (MPKMKSHRGAAKRFKKTGTGKLKRA).

It belongs to the bacterial ribosomal protein bL35 family.

This is Large ribosomal subunit protein bL35 from Clostridium botulinum (strain Eklund 17B / Type B).